We begin with the raw amino-acid sequence, 273 residues long: Ribonuclease PH (273 aa).

Residues R86 and G124–R126 contribute to the phosphate site. The tract at residues G254–L273 is disordered.

Belongs to the RNase PH family. Homohexameric ring arranged as a trimer of dimers.

It carries out the reaction tRNA(n+1) + phosphate = tRNA(n) + a ribonucleoside 5'-diphosphate. Functionally, phosphorolytic 3'-5' exoribonuclease that plays an important role in tRNA 3'-end maturation. Removes nucleotide residues following the 3'-CCA terminus of tRNAs; can also add nucleotides to the ends of RNA molecules by using nucleoside diphosphates as substrates, but this may not be physiologically important. Probably plays a role in initiation of 16S rRNA degradation (leading to ribosome degradation) during starvation. This chain is Ribonuclease PH, found in Symbiobacterium thermophilum (strain DSM 24528 / JCM 14929 / IAM 14863 / T).